Here is a 236-residue protein sequence, read N- to C-terminus: MTNLDAKSIIEYIGNAPKKTPVKVFIKGNLDQLNFPNTIENFTEQHSGIIFGDWKDVEPFLNDNKEKIVQYRIENDVRNSAVPLIDLKKFNARIEPGAIIRDQVAIGKNAVIMMGAIINIGAEIGDDTMIDMGVVLGGRAIVGKHCHIGAGSVLAGVIEPASAKPVQIDDDVVIGANAVVIEGIHVGKGAVIAAGAIVTKDVEPYTMVAGVPAKVIKKVDNKTLDKTGLEDDLRKI.

The protein belongs to the transferase hexapeptide repeat family. DapH subfamily.

It carries out the reaction (S)-2,3,4,5-tetrahydrodipicolinate + acetyl-CoA + H2O = L-2-acetamido-6-oxoheptanedioate + CoA. The protein operates within amino-acid biosynthesis; L-lysine biosynthesis via DAP pathway; LL-2,6-diaminopimelate from (S)-tetrahydrodipicolinate (acetylase route): step 1/3. In terms of biological role, catalyzes the transfer of an acetyl group from acetyl-CoA to tetrahydrodipicolinate. This chain is 2,3,4,5-tetrahydropyridine-2,6-dicarboxylate N-acetyltransferase, found in Lactobacillus acidophilus (strain ATCC 700396 / NCK56 / N2 / NCFM).